The sequence spans 1100 residues: DNA-directed RNA polymerase subunit beta (1100 aa).

Positions 1064–1100 (YEEDKEVDLMADVNQRRTPSRPTYESMSVGDIDDDDD) are disordered. The span at 1079-1089 (RRTPSRPTYES) shows a compositional bias: polar residues.

Belongs to the RNA polymerase beta chain family. As to quaternary structure, in cyanobacteria the RNAP catalytic core is composed of 2 alpha, 1 beta, 1 beta', 1 gamma and 1 omega subunit. When a sigma factor is associated with the core the holoenzyme is formed, which can initiate transcription.

The enzyme catalyses RNA(n) + a ribonucleoside 5'-triphosphate = RNA(n+1) + diphosphate. In terms of biological role, DNA-dependent RNA polymerase catalyzes the transcription of DNA into RNA using the four ribonucleoside triphosphates as substrates. This chain is DNA-directed RNA polymerase subunit beta, found in Synechococcus sp. (strain ATCC 27144 / PCC 6301 / SAUG 1402/1) (Anacystis nidulans).